The following is a 513-amino-acid chain: Chromosomal replication initiator protein DnaA (513 aa).

Residues Met1–Arg87 form a domain I, interacts with DnaA modulators region. Residues Arg87–Ser176 are domain II. Residues Ala113–Gln163 form a disordered region. The segment covering Ser123–Ala135 has biased composition (low complexity). The domain III, AAA+ region stretch occupies residues Tyr177–Ser393. ATP-binding residues include Gly221, Gly223, Lys224, and Thr225. The interval His394 to Thr513 is domain IV, binds dsDNA.

The protein belongs to the DnaA family. In terms of assembly, oligomerizes as a right-handed, spiral filament on DNA at oriC.

It is found in the cytoplasm. Its function is as follows. Plays an essential role in the initiation and regulation of chromosomal replication. ATP-DnaA binds to the origin of replication (oriC) to initiate formation of the DNA replication initiation complex once per cell cycle. Binds the DnaA box (a 9 base pair repeat at the origin) and separates the double-stranded (ds)DNA. Forms a right-handed helical filament on oriC DNA; dsDNA binds to the exterior of the filament while single-stranded (ss)DNA is stabiized in the filament's interior. The ATP-DnaA-oriC complex binds and stabilizes one strand of the AT-rich DNA unwinding element (DUE), permitting loading of DNA polymerase. After initiation quickly degrades to an ADP-DnaA complex that is not apt for DNA replication. Binds acidic phospholipids. The sequence is that of Chromosomal replication initiator protein DnaA from Pseudomonas fluorescens (strain ATCC BAA-477 / NRRL B-23932 / Pf-5).